Reading from the N-terminus, the 230-residue chain is GDT1-like protein 4 (230 aa).

The next 6 helical transmembrane spans lie at 12–32 (LAMTFVSEIGDKTFFAAAILA), 39–59 (LVLAGCLSALIVMTILSATLG), 71–91 (THHITTLLFFGFGLWSLWDGF), 135–155 (AFLTQFFSPIFLKAFSINFFG), 175–195 (FGVVLGGVVAQFLCTTAAVIG), and 207–227 (IVALSGGMLFIIFGIQSYLTS).

Belongs to the GDT1 family.

It localises to the membrane. This is GDT1-like protein 4 from Arabidopsis thaliana (Mouse-ear cress).